We begin with the raw amino-acid sequence, 433 residues long: 5-methylthioadenosine/S-adenosylhomocysteine deaminase (433 aa).

Residues histidine 62 and histidine 64 each contribute to the Zn(2+) site. Glutamate 91, arginine 143, and histidine 183 together coordinate substrate. Histidine 210 provides a ligand contact to Zn(2+). Residues glutamate 213 and aspartate 298 each contribute to the substrate site. A Zn(2+)-binding site is contributed by aspartate 298.

It belongs to the metallo-dependent hydrolases superfamily. MTA/SAH deaminase family. Zn(2+) serves as cofactor.

The catalysed reaction is S-adenosyl-L-homocysteine + H2O + H(+) = S-inosyl-L-homocysteine + NH4(+). It carries out the reaction S-methyl-5'-thioadenosine + H2O + H(+) = S-methyl-5'-thioinosine + NH4(+). In terms of biological role, catalyzes the deamination of 5-methylthioadenosine and S-adenosyl-L-homocysteine into 5-methylthioinosine and S-inosyl-L-homocysteine, respectively. Is also able to deaminate adenosine. The sequence is that of 5-methylthioadenosine/S-adenosylhomocysteine deaminase from Caldanaerobacter subterraneus subsp. tengcongensis (strain DSM 15242 / JCM 11007 / NBRC 100824 / MB4) (Thermoanaerobacter tengcongensis).